The primary structure comprises 323 residues: tRNA U34 carboxymethyltransferase (323 aa).

Carboxy-S-adenosyl-L-methionine-binding positions include Lys-91, Trp-105, Lys-110, Gly-130, 152–154 (DPS), 181–182 (IE), Met-196, Tyr-200, and Arg-315.

Belongs to the class I-like SAM-binding methyltransferase superfamily. CmoB family. As to quaternary structure, homotetramer.

The enzyme catalyses carboxy-S-adenosyl-L-methionine + 5-hydroxyuridine(34) in tRNA = 5-carboxymethoxyuridine(34) in tRNA + S-adenosyl-L-homocysteine + H(+). Its function is as follows. Catalyzes carboxymethyl transfer from carboxy-S-adenosyl-L-methionine (Cx-SAM) to 5-hydroxyuridine (ho5U) to form 5-carboxymethoxyuridine (cmo5U) at position 34 in tRNAs. The protein is tRNA U34 carboxymethyltransferase of Vibrio parahaemolyticus serotype O3:K6 (strain RIMD 2210633).